Consider the following 383-residue polypeptide: Succinyl-diaminopimelate desuccinylase (383 aa).

His-79 serves as a coordination point for Zn(2+). Residue Asp-81 is part of the active site. Asp-110 lines the Zn(2+) pocket. The active-site Proton acceptor is the Glu-141. Zn(2+)-binding residues include Glu-142, Glu-170, and His-355.

This sequence belongs to the peptidase M20A family. DapE subfamily. In terms of assembly, homodimer. Zn(2+) serves as cofactor. Co(2+) is required as a cofactor.

The enzyme catalyses N-succinyl-(2S,6S)-2,6-diaminopimelate + H2O = (2S,6S)-2,6-diaminopimelate + succinate. It functions in the pathway amino-acid biosynthesis; L-lysine biosynthesis via DAP pathway; LL-2,6-diaminopimelate from (S)-tetrahydrodipicolinate (succinylase route): step 3/3. Catalyzes the hydrolysis of N-succinyl-L,L-diaminopimelic acid (SDAP), forming succinate and LL-2,6-diaminopimelate (DAP), an intermediate involved in the bacterial biosynthesis of lysine and meso-diaminopimelic acid, an essential component of bacterial cell walls. This chain is Succinyl-diaminopimelate desuccinylase, found in Helicobacter pylori (strain Shi470).